A 398-amino-acid chain; its full sequence is Enoyl-[acyl-carrier-protein] reductase [NADH] (398 aa).

NAD(+) is bound by residues 48 to 53, 74 to 75, 111 to 112, and 139 to 140; these read GASTGY, FE, DA, and LA. A substrate-binding site is contributed by Tyr-225. Tyr-235 acts as the Proton donor in catalysis. NAD(+)-binding positions include Lys-244 and 273 to 275; that span reads VVT.

Belongs to the TER reductase family. In terms of assembly, monomer.

The catalysed reaction is a 2,3-saturated acyl-[ACP] + NAD(+) = a (2E)-enoyl-[ACP] + NADH + H(+). It participates in lipid metabolism; fatty acid biosynthesis. In terms of biological role, involved in the final reduction of the elongation cycle of fatty acid synthesis (FAS II). Catalyzes the reduction of a carbon-carbon double bond in an enoyl moiety that is covalently linked to an acyl carrier protein (ACP). The polypeptide is Enoyl-[acyl-carrier-protein] reductase [NADH] (Paraburkholderia phytofirmans (strain DSM 17436 / LMG 22146 / PsJN) (Burkholderia phytofirmans)).